Reading from the N-terminus, the 157-residue chain is 2-C-methyl-D-erythritol 2,4-cyclodiphosphate synthase (157 aa).

A divalent metal cation-binding residues include aspartate 8 and histidine 10. 4-CDP-2-C-methyl-D-erythritol 2-phosphate-binding positions include 8-10 (DVH) and 34-35 (HS). Histidine 42 is a binding site for a divalent metal cation. 4-CDP-2-C-methyl-D-erythritol 2-phosphate is bound by residues 56 to 58 (DIG), 61 to 65 (FPDTD), 100 to 106 (AQAPKMA), 132 to 135 (TTTE), phenylalanine 139, and arginine 142.

Belongs to the IspF family. As to quaternary structure, homotrimer. A divalent metal cation serves as cofactor.

It catalyses the reaction 4-CDP-2-C-methyl-D-erythritol 2-phosphate = 2-C-methyl-D-erythritol 2,4-cyclic diphosphate + CMP. It functions in the pathway isoprenoid biosynthesis; isopentenyl diphosphate biosynthesis via DXP pathway; isopentenyl diphosphate from 1-deoxy-D-xylulose 5-phosphate: step 4/6. Its function is as follows. Involved in the biosynthesis of isopentenyl diphosphate (IPP) and dimethylallyl diphosphate (DMAPP), two major building blocks of isoprenoid compounds. Catalyzes the conversion of 4-diphosphocytidyl-2-C-methyl-D-erythritol 2-phosphate (CDP-ME2P) to 2-C-methyl-D-erythritol 2,4-cyclodiphosphate (ME-CPP) with a corresponding release of cytidine 5-monophosphate (CMP). This Azotobacter vinelandii (strain DJ / ATCC BAA-1303) protein is 2-C-methyl-D-erythritol 2,4-cyclodiphosphate synthase.